A 452-amino-acid polypeptide reads, in one-letter code: NADH-ubiquinone oxidoreductase chain 4 (452 aa).

14 helical membrane-spanning segments follow: residues 4-24 (LVLG…SMVW), 29-49 (VGSV…MTIS), 59-79 (FVSL…LLAS), 88-110 (LIYQ…LAFM), 114-136 (LLLF…TRWG), 144-164 (AGTY…ICLI), 182-202 (VFQL…AFLV), 221-241 (PIAG…YGMM), 252-272 (MLSS…MGGI), 282-304 (LIAY…GVAW), 309-331 (AMVL…NLWY), 345-365 (LIMI…MNMA), 390-410 (IVYM…LFGM), and 432-452 (LLTT…GLMF).

Belongs to the complex I subunit 4 family.

The protein resides in the mitochondrion membrane. The catalysed reaction is a ubiquinone + NADH + 5 H(+)(in) = a ubiquinol + NAD(+) + 4 H(+)(out). Functionally, core subunit of the mitochondrial membrane respiratory chain NADH dehydrogenase (Complex I) that is believed to belong to the minimal assembly required for catalysis. Complex I functions in the transfer of electrons from NADH to the respiratory chain. The immediate electron acceptor for the enzyme is believed to be ubiquinone. The protein is NADH-ubiquinone oxidoreductase chain 4 (ND4) of Branchiostoma lanceolatum (Common lancelet).